A 157-amino-acid chain; its full sequence is uncharacterized protein (157 aa).

The N-acetyltransferase domain occupies 3 to 157 (FTLEDMTEEE…TNIRMRKQLC (155 aa)).

It belongs to the acetyltransferase family.

This is an uncharacterized protein from Bacillus subtilis (strain 168).